Reading from the N-terminus, the 460-residue chain is Acetyl-coenzyme A carboxylase carboxyl transferase subunit beta, chloroplastic (460 aa).

One can recognise a CoA carboxyltransferase N-terminal domain in the interval Leu179–Asn460. Zn(2+) is bound by residues Cys183, Cys186, Cys202, and Cys205. A C4-type zinc finger spans residues Cys183–Cys205.

The protein belongs to the AccD/PCCB family. Acetyl-CoA carboxylase is a heterohexamer composed of biotin carboxyl carrier protein, biotin carboxylase and 2 subunits each of ACCase subunit alpha and ACCase plastid-coded subunit beta (accD). It depends on Zn(2+) as a cofactor.

Its subcellular location is the plastid. The protein resides in the chloroplast stroma. It catalyses the reaction N(6)-carboxybiotinyl-L-lysyl-[protein] + acetyl-CoA = N(6)-biotinyl-L-lysyl-[protein] + malonyl-CoA. The protein operates within lipid metabolism; malonyl-CoA biosynthesis; malonyl-CoA from acetyl-CoA: step 1/1. In terms of biological role, component of the acetyl coenzyme A carboxylase (ACC) complex. Biotin carboxylase (BC) catalyzes the carboxylation of biotin on its carrier protein (BCCP) and then the CO(2) group is transferred by the transcarboxylase to acetyl-CoA to form malonyl-CoA. This chain is Acetyl-coenzyme A carboxylase carboxyl transferase subunit beta, chloroplastic, found in Cicer arietinum (Chickpea).